Here is a 153-residue protein sequence, read N- to C-terminus: Methylglyoxal synthase (153 aa).

The region spanning 3–153 is the MGS-like domain; it reads DQVNRPKGVT…SYLSRDVPGN (151 aa). Residues His19, Lys23, 45-48, and 65-66 each bind substrate; these read TGTT and SG. Asp71 serves as the catalytic Proton donor/acceptor. His98 lines the substrate pocket.

Belongs to the methylglyoxal synthase family.

It carries out the reaction dihydroxyacetone phosphate = methylglyoxal + phosphate. Its function is as follows. Catalyzes the formation of methylglyoxal from dihydroxyacetone phosphate. In Hahella chejuensis (strain KCTC 2396), this protein is Methylglyoxal synthase.